Reading from the N-terminus, the 211-residue chain is Metalloproteinase inhibitor 3 (211 aa).

Positions 1–23 (MTPWLGLVVLLSCWSLGHWGTEA) are cleaved as a signal peptide. Zn(2+) is bound at residue cysteine 24. Involved in metalloproteinase-binding regions lie at residues 24–27 (CTCS) and 88–89 (ES). 6 cysteine pairs are disulfide-bonded: cysteine 24/cysteine 91, cysteine 26/cysteine 118, cysteine 36/cysteine 143, cysteine 145/cysteine 192, cysteine 150/cysteine 155, and cysteine 163/cysteine 184. The NTR domain maps to 24 to 143 (CTCSPSHPQD…GLNYRYHLGC (120 aa)). The mediates interaction with EFEMP1 stretch occupies residues 105–188 (TGRVYEGKMY…SKHYACIRQK (84 aa)).

It belongs to the protease inhibitor I35 (TIMP) family. As to quaternary structure, interacts with EFEMP1. Interacts with KDR.

The protein localises to the secreted. The protein resides in the extracellular space. It is found in the extracellular matrix. In terms of biological role, mediates a variety of processes including matrix regulation and turnover, inflammation, and angiogenesis, through reversible inhibition of zinc protease superfamily enzymes, primarily matrix metalloproteinases (MMPs). Regulates extracellular matrix (ECM) remodeling through inhibition of matrix metalloproteinases (MMP) including MMP-1, MMP-2, MMP-3, MMP-7, MMP-9, MMP-13, MMP-14 and MMP-15. Additionally, modulates the processing of amyloid precursor protein (APP) and apolipoprotein E receptor ApoER2 by inhibiting two alpha-secretases ADAM10 and ADAM17. Functions as a tumor suppressor and a potent inhibitor of angiogenesis. Exerts its anti-angiogenic effect by directly interacting with vascular endothelial growth factor (VEGF) receptor-2/KDR, preventing its binding to the VEGFA ligand. Selectively induces apoptosis in angiogenic endothelial cells through a caspase-independent cell death pathway. Mechanistically, inhibits matrix-induced focal adhesion kinase PTK2 tyrosine phosphorylation and association with paxillin/PXN and disrupts the incorporation of ITGB3, PTK2 and PXN into focal adhesion contacts on the matrix. This Rattus norvegicus (Rat) protein is Metalloproteinase inhibitor 3 (Timp3).